Reading from the N-terminus, the 95-residue chain is Small ribosomal subunit protein bS6 (95 aa).

It belongs to the bacterial ribosomal protein bS6 family.

Functionally, binds together with bS18 to 16S ribosomal RNA. This Corynebacterium jeikeium (strain K411) protein is Small ribosomal subunit protein bS6.